The sequence spans 458 residues: Zinc finger protein 239 (458 aa).

Lysine 108 is covalently cross-linked (Glycyl lysine isopeptide (Lys-Gly) (interchain with G-Cter in SUMO2)). Serine 191 carries the post-translational modification Phosphoserine. 9 C2H2-type zinc fingers span residues 207–229, 235–257, 263–285, 291–313, 319–341, 347–369, 375–397, 403–425, and 431–453; these read YECS…QRDH, YKCE…QAVH, YKCD…HAVH, YKCD…QRVH, YECE…QRVH, YKCG…RCIH, YQCY…LRVH, YHCG…QRVH, and YECS…QRVH.

This sequence belongs to the krueppel C2H2-type zinc-finger protein family.

It is found in the nucleus. In terms of biological role, may be involved in transcriptional regulation. The sequence is that of Zinc finger protein 239 (ZNF239) from Homo sapiens (Human).